We begin with the raw amino-acid sequence, 1066 residues long: Pumilio homolog 2 (1066 aa).

Positions 1-260 (MNHDFQALAL…ATVGLFDYNS (260 aa)) are interaction with SNAPIN. A phosphoserine mark is found at Ser67, Ser82, and Ser102. Residues 106–204 (KLDSRFRKGN…NPSEGLGPLP (99 aa)) form a disordered region. Over residues 119 to 133 (RDAETDGPEKGDQKG) the composition is skewed to basic and acidic residues. Ser136, Ser178, and Ser182 each carry phosphoserine. Phosphothreonine is present on residues Thr184 and Thr396. Residues 494–553 (STNGLFRPIGTQPPQQQQQQPSTNLQSNSFYGSSSLTNSSQSSSLFSHGPGQPGSTSLGF) are disordered. Over residues 505–514 (QPPQQQQQQP) the composition is skewed to low complexity. The span at 515–525 (STNLQSNSFYG) shows a compositional bias: polar residues. Low complexity predominate over residues 526–540 (SSSLTNSSQSSSLFS). Residues Ser587 and Ser592 each carry the phosphoserine modification. The tract at residues 620 to 650 (SPIGMPLPSQTPGHSLTPPPSLSSHGSSSSL) is disordered. Residues 630–650 (TPGHSLTPPPSLSSHGSSSSL) show a composition bias toward low complexity. The residue at position 674 (Arg674) is an Omega-N-methylarginine. A phosphoserine mark is found at Ser684 and Ser700. Residues 706 to 1048 (GRSRLLEDFR…HILAKLEKYY (343 aa)) enclose the PUM-HD domain. Pumilio repeat units lie at residues 726–761 (DLIG…MVFN), 762–797 (EILQ…ALAT), 798–835 (RIRG…EMVK), 836–871 (ELDG…FIID), 872–907 (AFKG…PILE), 908–943 (ELHQ…KIVS), 944–979 (EIRG…LLID), and 983–1022 (CQND…IIMH). The tract at residues 741-745 (SRFIQ) is adenine-nucleotide binding in RNA target. A uracil-nucleotide binding in RNA target region spans residues 777 to 781 (NYVIQ). Positions 813–817 (CRVIQ) are adenine-nucleotide binding in RNA target. The non-specific-nucleotide binding in RNA target stretch occupies residues 851–855 (NHVVQ). The adenine-nucleotide binding in RNA target stretch occupies residues 887–891 (CRVIQ). Residues 923–927 (NYVIQ) are uracil-nucleotide binding in RNA target. The segment at 959-963 (SNVVE) is guanine-nucleotide binding in RNA target. The uracil-nucleotide binding in RNA target stretch occupies residues 1002-1006 (NYVVQ).

Homodimer; homodimerizes in vitro. Interacts with DAZ1, DAZL and NANOS1 via its pumilio repeats. Interacts with NANOS3. Interacts with SNAPIN. Recruits the CCR4-POP2-NOT deadenylase leading to translational inhibition and mRNA degradation. Interacts with DDX20. In case of viral infection, interacts with DHX58. Interacts with TRIM71 (via NHL repeats) in an RNA-dependent manner. As to expression, expressed in male germ cells of adult testis (at protein level). Highly expressed in testis and ovary. Predominantly expressed in stem cells and germ cells. Expressed at lower level in brain, heart, kidney, liver, muscle, placenta, intestine and stomach Expressed in cerebellum, corpus callosum, caudate nucleus, hippocampus, medulla oblongata and putamen. Expressed in all fetal tissues tested.

Its subcellular location is the cytoplasm. It localises to the cytoplasmic granule. The protein localises to the perinuclear region. In terms of biological role, sequence-specific RNA-binding protein that acts as a post-transcriptional repressor by binding the 3'-UTR of mRNA targets. Binds to an RNA consensus sequence, the Pumilio Response Element (PRE), 5'-UGUANAUA-3', that is related to the Nanos Response Element (NRE) (, PubMed:21397187). Mediates post-transcriptional repression of transcripts via different mechanisms: acts via direct recruitment of the CCR4-POP2-NOT deadenylase leading to translational inhibition and mRNA degradation. Also mediates deadenylation-independent repression by promoting accessibility of miRNAs. Acts as a post-transcriptional repressor of E2F3 mRNAs by binding to its 3'-UTR and facilitating miRNA regulation. Plays a role in cytoplasmic sensing of viral infection. Represses a program of genes necessary to maintain genomic stability such as key mitotic, DNA repair and DNA replication factors. Its ability to repress those target mRNAs is regulated by the lncRNA NORAD (non-coding RNA activated by DNA damage) which, due to its high abundance and multitude of PUMILIO binding sites, is able to sequester a significant fraction of PUM1 and PUM2 in the cytoplasm. May regulate DCUN1D3 mRNA levels. May support proliferation and self-renewal of stem cells. Binds specifically to miRNA MIR199A precursor, with PUM1, regulates miRNA MIR199A expression at a postranscriptional level. This chain is Pumilio homolog 2 (PUM2), found in Homo sapiens (Human).